Here is a 687-residue protein sequence, read N- to C-terminus: uncharacterized protein (687 aa).

The next 14 membrane-spanning stretches (helical) occupy residues 28 to 48 (IIFT…TIVV), 66 to 86 (WAVT…GKLG), 94 to 114 (VLLG…LSQT), 126 to 146 (GVGA…VVPL), 154 to 174 (GVLG…GGWL), 182 to 202 (WAFW…ATAV), 211 to 231 (PVID…LIMA), 243 to 263 (SATI…FVWL), 287 to 307 (VLSF…PIYL), 320 to 340 (LRTL…GVLV), 348 to 368 (IFPV…SQMD), 378 to 398 (LYLV…VLIV), 414 to 434 (VTFF…ALFV), and 480 to 500 (LTQV…LALL).

Belongs to the major facilitator superfamily. TCR/Tet family.

The protein localises to the cell membrane. This is an uncharacterized protein from Mycobacterium tuberculosis (strain CDC 1551 / Oshkosh).